A 1065-amino-acid chain; its full sequence is Leucine-rich repeats and immunoglobulin-like domains protein 2 (1065 aa).

An N-terminal signal peptide occupies residues 1 to 40; the sequence is MAPAPLGVPEEQLLGCRSRVLSRLLFIAQTALLLLPAAGA. The region spanning 41–75 is the LRRNT domain; the sequence is GLCPAPCSCRIPLLDCSRRKLPAPSWRALSGLLPP. The Extracellular portion of the chain corresponds to 41 to 807; that stretch reads GLCPAPCSCR…HEDDGWTTVG (767 aa). LRR repeat units lie at residues 76-97, 98-119, 121-142, 145-166, 168-189, 193-214, 216-237, 240-261, 264-285, 288-309, 312-333, 336-357, 360-382, 387-408, and 411-432; these read DTAI…LESQ, TLQE…GEPT, NITL…ALQF, ALES…SFPR, QLKY…CFDN, SLLV…IFKL, HLQF…TFQG, SLRS…AFFG, NMEE…WLYG, MLQQ…AWEF, RLSE…AFVG, LLER…VFRF, NLQT…SEAF, SLTK…AFIG, and SLEH…AFSQ. Residue asparagine 91 is glycosylated (N-linked (GlcNAc...) asparagine). N-linked (GlcNAc...) asparagine glycosylation occurs at asparagine 121. Residues asparagine 173 and asparagine 189 are each glycosylated (N-linked (GlcNAc...) asparagine). Asparagine 274 carries an N-linked (GlcNAc...) asparagine glycan. N-linked (GlcNAc...) asparagine glycosylation is found at asparagine 441, asparagine 468, asparagine 514, asparagine 571, and asparagine 589. The LRRCT domain occupies 443–494; that stretch reads SSLLCDCHLKWLLQWLVDNNFQHSVNVSCAHPEWLAGQSILNVDLKDFVCDD. Ig-like C2-type domains lie at 498-597, 602-691, and 696-785; these read PQIR…AKLT, PSFL…ASLT, and PSFI…NVIS. Cysteine 519 and cysteine 580 are joined by a disulfide. Cysteine 623 and cysteine 675 form a disulfide bridge. Asparagine 687 and asparagine 728 each carry an N-linked (GlcNAc...) asparagine glycan. An intrachain disulfide couples cysteine 717 to cysteine 766. The chain crosses the membrane as a helical span at residues 808–828; sequence IVIIVVVCCVVGTSLIWVIVI. The Cytoplasmic segment spans residues 829–1065; it reads YHMRRKNEDY…RNIQDGSEGT (237 aa). Tyrosine 906 bears the Phosphotyrosine mark. Disordered regions lie at residues 963–990 and 1003–1040; these read SANR…QMSG and ELGL…ASSM. Over residues 974–983 the composition is skewed to basic and acidic residues; it reads NHERISEKKL. Residues 1013–1024 show a composition bias toward polar residues; the sequence is QQPVHESPQLHQ.

In terms of tissue distribution, detected in all tissues analyzed.

The protein resides in the cell membrane. Its subcellular location is the cytoplasm. The sequence is that of Leucine-rich repeats and immunoglobulin-like domains protein 2 (LRIG2) from Homo sapiens (Human).